A 125-amino-acid polypeptide reads, in one-letter code: Small ribosomal subunit protein eS8 (125 aa).

Belongs to the eukaryotic ribosomal protein eS8 family. As to quaternary structure, part of the 30S ribosomal subunit.

This is Small ribosomal subunit protein eS8 from Methanocorpusculum labreanum (strain ATCC 43576 / DSM 4855 / Z).